The following is a 72-amino-acid chain: Putative snRNP Sm-like protein (72 aa).

One can recognise a Sm domain in the interval 4 to 72 (RPLDILNNAL…RGDNVVYVSP (69 aa)).

Belongs to the snRNP Sm proteins family.

In Methanosarcina barkeri (strain Fusaro / DSM 804), this protein is Putative snRNP Sm-like protein.